A 372-amino-acid chain; its full sequence is Glutamate 5-kinase (372 aa).

Residue lysine 14 participates in ATP binding. Substrate contacts are provided by serine 54, aspartate 141, and asparagine 153. An ATP-binding site is contributed by 173-174 (TD). The PUA domain occupies 280-358 (RGTLVLDAGA…EAIESILGYS (79 aa)).

The protein belongs to the glutamate 5-kinase family.

The protein localises to the cytoplasm. The catalysed reaction is L-glutamate + ATP = L-glutamyl 5-phosphate + ADP. Its pathway is amino-acid biosynthesis; L-proline biosynthesis; L-glutamate 5-semialdehyde from L-glutamate: step 1/2. Its function is as follows. Catalyzes the transfer of a phosphate group to glutamate to form L-glutamate 5-phosphate. This is Glutamate 5-kinase from Pseudomonas putida (strain ATCC 700007 / DSM 6899 / JCM 31910 / BCRC 17059 / LMG 24140 / F1).